The primary structure comprises 476 residues: Serine/threonine-protein kinase PBL36 (476 aa).

The 287-residue stretch at 126 to 412 folds into the Protein kinase domain; sequence FRPESLLGEG…VEALKPLPNL (287 aa). ATP is bound by residues 132–140 and Lys164; that span reads LGEGGFGCV. The residue at position 209 (Tyr209) is a Phosphotyrosine. Asp259 functions as the Proton acceptor in the catalytic mechanism. Phosphoserine occurs at positions 263 and 293. Phosphothreonine is present on residues Thr294 and Thr299. Tyr307 carries the phosphotyrosine modification. Residues 431 to 476 form a disordered region; that stretch reads NGVRTQGGGFVSRNGPPMRSLSSLNLPQASPYRYARQSPKPKGKEP.

This sequence belongs to the protein kinase superfamily. Ser/Thr protein kinase family. Interacts with SD129. Post-translationally, phosphorylated by SD129 in response to the pathogen-associated molecular pattern (PAMP) 3-OH-C10:0, a medium-chain 3-hydroxy fatty acid.

The protein localises to the cell membrane. It carries out the reaction L-seryl-[protein] + ATP = O-phospho-L-seryl-[protein] + ADP + H(+). The catalysed reaction is L-threonyl-[protein] + ATP = O-phospho-L-threonyl-[protein] + ADP + H(+). Involved in chitin-triggered immune signaling and is required for reactive oxygen species (ROS) production. Acts downstream of SD129 in defense signaling triggered by the pathogen-associated molecular pattern (PAMP) 3-OH-C10:0, a medium-chain 3-hydroxy fatty acid. The chain is Serine/threonine-protein kinase PBL36 from Arabidopsis thaliana (Mouse-ear cress).